The chain runs to 332 residues: 2,3-bisphosphoglycerate-dependent phosphoglycerate mutase 2 (332 aa).

The transit peptide at 1-48 directs the protein to the chloroplast; it reads MATSTTMSHQAIGSVVSQRPFKASQFLKEPLNNVPMKFRQKRFKIEAT. Substrate is bound by residues 85–92, 98–99, arginine 135, 189–192, lysine 200, 216–217, and 260–261; these read RHGESLWN, TG, ERMY, RR, and GN. Histidine 86 acts as the Tele-phosphohistidine intermediate in catalysis. Glutamate 189 functions as the Proton donor/acceptor in the catalytic mechanism.

It belongs to the phosphoglycerate mutase family. BPG-dependent PGAM subfamily.

The protein localises to the plastid. It localises to the chloroplast. It catalyses the reaction (2R)-2-phosphoglycerate = (2R)-3-phosphoglycerate. It functions in the pathway carbohydrate degradation; glycolysis; pyruvate from D-glyceraldehyde 3-phosphate: step 3/5. Catalyzes the interconversion of 2-phosphoglycerate and 3-phosphoglycerate. This Arabidopsis thaliana (Mouse-ear cress) protein is 2,3-bisphosphoglycerate-dependent phosphoglycerate mutase 2.